We begin with the raw amino-acid sequence, 142 residues long: Large ribosomal subunit protein uL13 (142 aa).

The protein belongs to the universal ribosomal protein uL13 family. In terms of assembly, part of the 50S ribosomal subunit.

This protein is one of the early assembly proteins of the 50S ribosomal subunit, although it is not seen to bind rRNA by itself. It is important during the early stages of 50S assembly. This Cupriavidus necator (strain ATCC 17699 / DSM 428 / KCTC 22496 / NCIMB 10442 / H16 / Stanier 337) (Ralstonia eutropha) protein is Large ribosomal subunit protein uL13.